Consider the following 209-residue polypeptide: Small ribosomal subunit protein uS5 (209 aa).

The S5 DRBM domain occupies 48 to 111 (LEDEVLDINM…DAAKLNITYI (64 aa)).

The protein belongs to the universal ribosomal protein uS5 family. As to quaternary structure, part of the 30S ribosomal subunit. Contacts protein S4.

In terms of biological role, with S4 and S12 plays an important role in translational accuracy. The sequence is that of Small ribosomal subunit protein uS5 from Methanosarcina mazei (strain ATCC BAA-159 / DSM 3647 / Goe1 / Go1 / JCM 11833 / OCM 88) (Methanosarcina frisia).